Reading from the N-terminus, the 142-residue chain is Small ribosomal subunit protein uS12z (142 aa).

Pro61 is modified (hydroxyproline).

Belongs to the universal ribosomal protein uS12 family.

The protein is Small ribosomal subunit protein uS12z (RPS23A) of Arabidopsis thaliana (Mouse-ear cress).